The sequence spans 395 residues: S-adenosylmethionine synthase (395 aa).

His-16 contributes to the ATP binding site. Residue Asp-18 participates in Mg(2+) binding. Glu-44 provides a ligand contact to K(+). L-methionine-binding residues include Glu-57 and Gln-100. The interval Gln-100–Arg-110 is flexible loop. Residues Asp-167–Lys-169, Arg-233–Phe-234, Asp-242, Arg-248–Lys-249, Ala-265, and Lys-269 each bind ATP. Position 242 (Asp-242) interacts with L-methionine. Residue Lys-273 coordinates L-methionine.

It belongs to the AdoMet synthase family. As to quaternary structure, homotetramer; dimer of dimers. It depends on Mg(2+) as a cofactor. Requires K(+) as cofactor.

The protein localises to the cytoplasm. The enzyme catalyses L-methionine + ATP + H2O = S-adenosyl-L-methionine + phosphate + diphosphate. It participates in amino-acid biosynthesis; S-adenosyl-L-methionine biosynthesis; S-adenosyl-L-methionine from L-methionine: step 1/1. Functionally, catalyzes the formation of S-adenosylmethionine (AdoMet) from methionine and ATP. The overall synthetic reaction is composed of two sequential steps, AdoMet formation and the subsequent tripolyphosphate hydrolysis which occurs prior to release of AdoMet from the enzyme. In Paraburkholderia phymatum (strain DSM 17167 / CIP 108236 / LMG 21445 / STM815) (Burkholderia phymatum), this protein is S-adenosylmethionine synthase.